The primary structure comprises 168 residues: ATP synthase subunit b (168 aa).

The helical transmembrane segment at Ser9–Leu29 threads the bilayer.

This sequence belongs to the ATPase B chain family. In terms of assembly, F-type ATPases have 2 components, F(1) - the catalytic core - and F(0) - the membrane proton channel. F(1) has five subunits: alpha(3), beta(3), gamma(1), delta(1), epsilon(1). F(0) has three main subunits: a(1), b(2) and c(10-14). The alpha and beta chains form an alternating ring which encloses part of the gamma chain. F(1) is attached to F(0) by a central stalk formed by the gamma and epsilon chains, while a peripheral stalk is formed by the delta and b chains.

It is found in the cell membrane. In terms of biological role, f(1)F(0) ATP synthase produces ATP from ADP in the presence of a proton or sodium gradient. F-type ATPases consist of two structural domains, F(1) containing the extramembraneous catalytic core and F(0) containing the membrane proton channel, linked together by a central stalk and a peripheral stalk. During catalysis, ATP synthesis in the catalytic domain of F(1) is coupled via a rotary mechanism of the central stalk subunits to proton translocation. Component of the F(0) channel, it forms part of the peripheral stalk, linking F(1) to F(0). The sequence is that of ATP synthase subunit b from Bacillus cereus (strain B4264).